The sequence spans 292 residues: Calponin-1 (292 aa).

The region spanning 28 to 131 (PQTERQLRVW…STLIALASQA (104 aa)) is the Calponin-homology (CH) domain. Calponin-like repeat units follow at residues 164-189 (IGLQMGTNKFASQQGMTAYGTRRHLY), 204-229 (ISLQMGTNKGASQAGMTAPGTKRQIF), and 243-268 (IGLQMGSNKGASQQGMTVYGLPRQVY). Thr170 is subject to Phosphothreonine; by ROCK2. Ser175 carries the phosphoserine; by PKC, CaMK2 and ROCK2 modification. Phosphothreonine; by ROCK2 is present on residues Thr180 and Thr184. Thr184 carries the post-translational modification Phosphothreonine; by PKC and CaMK2. The calmodulin-binding stretch occupies residues 185-193 (RRHLYDPKL). A Phosphothreonine; by ROCK2 modification is found at Thr259.

This sequence belongs to the calponin family. In terms of processing, phosphorylation by PKC or CaM kinase II reduces the binding of calponin to F-actin and tropomyosin. Smooth muscle, and tissues containing significant amounts of smooth muscle.

In terms of biological role, thin filament-associated protein that is implicated in the regulation and modulation of smooth muscle contraction. It is capable of binding to actin, calmodulin and tropomyosin. The interaction of calponin with actin inhibits the actomyosin Mg-ATPase activity. This Gallus gallus (Chicken) protein is Calponin-1 (CNN1).